Here is a 217-residue protein sequence, read N- to C-terminus: Large ribosomal subunit protein uL1 (217 aa).

Belongs to the universal ribosomal protein uL1 family.

This is Large ribosomal subunit protein uL1 (RpL10Ab) from Drosophila melanogaster (Fruit fly).